The chain runs to 123 residues: Large ribosomal subunit protein bL12 (123 aa).

Belongs to the bacterial ribosomal protein bL12 family. As to quaternary structure, homodimer. Part of the ribosomal stalk of the 50S ribosomal subunit. Forms a multimeric L10(L12)X complex, where L10 forms an elongated spine to which 2 to 4 L12 dimers bind in a sequential fashion. Binds GTP-bound translation factors.

Its function is as follows. Forms part of the ribosomal stalk which helps the ribosome interact with GTP-bound translation factors. Is thus essential for accurate translation. This chain is Large ribosomal subunit protein bL12, found in Laribacter hongkongensis (strain HLHK9).